We begin with the raw amino-acid sequence, 143 residues long: 3-dehydroquinate dehydratase (143 aa).

The Proton acceptor role is filled by Tyr-22. Substrate is bound by residues Asn-73, His-79, and Asp-86. The active-site Proton donor is His-99. Substrate contacts are provided by residues 100–101 (LS) and Arg-110.

This sequence belongs to the type-II 3-dehydroquinase family. In terms of assembly, homododecamer.

The catalysed reaction is 3-dehydroquinate = 3-dehydroshikimate + H2O. It functions in the pathway metabolic intermediate biosynthesis; chorismate biosynthesis; chorismate from D-erythrose 4-phosphate and phosphoenolpyruvate: step 3/7. Its function is as follows. Catalyzes a trans-dehydration via an enolate intermediate. The sequence is that of 3-dehydroquinate dehydratase from Salinispora tropica (strain ATCC BAA-916 / DSM 44818 / JCM 13857 / NBRC 105044 / CNB-440).